The chain runs to 305 residues: Tyrosine recombinase XerD (305 aa).

Residues 2–87 form the Core-binding (CB) domain; that stretch reads SQGEAWADAF…AVRQFYRFVL (86 aa). The region spanning 108–295 is the Tyr recombinase domain; sequence PLPKVLERDE…AGEHLAHIVQ (188 aa). Active-site residues include Arg-149, Lys-173, His-247, Arg-250, and His-273. Residue Tyr-282 is the O-(3'-phospho-DNA)-tyrosine intermediate of the active site.

The protein belongs to the 'phage' integrase family. XerD subfamily. In terms of assembly, forms a cyclic heterotetrameric complex composed of two molecules of XerC and two molecules of XerD.

It is found in the cytoplasm. Its function is as follows. Site-specific tyrosine recombinase, which acts by catalyzing the cutting and rejoining of the recombining DNA molecules. The XerC-XerD complex is essential to convert dimers of the bacterial chromosome into monomers to permit their segregation at cell division. It also contributes to the segregational stability of plasmids. This chain is Tyrosine recombinase XerD, found in Caulobacter vibrioides (strain ATCC 19089 / CIP 103742 / CB 15) (Caulobacter crescentus).